Consider the following 379-residue polypeptide: 1-deoxy-D-xylulose 5-phosphate reductoisomerase (379 aa).

Thr-10, Gly-11, Ser-12, Ile-13, Asn-39, and Asn-121 together coordinate NADPH. Lys-122 is a 1-deoxy-D-xylulose 5-phosphate binding site. Residue Glu-123 coordinates NADPH. Asp-147 is a Mn(2+) binding site. 1-deoxy-D-xylulose 5-phosphate contacts are provided by Ser-148, Glu-149, Ser-173, and His-196. Residue Glu-149 participates in Mn(2+) binding. Gly-202 provides a ligand contact to NADPH. Positions 209, 214, 215, and 218 each coordinate 1-deoxy-D-xylulose 5-phosphate. Residue Glu-218 coordinates Mn(2+).

Belongs to the DXR family. Mg(2+) is required as a cofactor. It depends on Mn(2+) as a cofactor.

The enzyme catalyses 2-C-methyl-D-erythritol 4-phosphate + NADP(+) = 1-deoxy-D-xylulose 5-phosphate + NADPH + H(+). The protein operates within isoprenoid biosynthesis; isopentenyl diphosphate biosynthesis via DXP pathway; isopentenyl diphosphate from 1-deoxy-D-xylulose 5-phosphate: step 1/6. In terms of biological role, catalyzes the NADPH-dependent rearrangement and reduction of 1-deoxy-D-xylulose-5-phosphate (DXP) to 2-C-methyl-D-erythritol 4-phosphate (MEP). The polypeptide is 1-deoxy-D-xylulose 5-phosphate reductoisomerase (Chlamydia felis (strain Fe/C-56) (Chlamydophila felis)).